A 381-amino-acid chain; its full sequence is Cytochrome b (381 aa).

The next 4 membrane-spanning stretches (helical) occupy residues 34–54 (FGSLLGLCLIIQILTGLFLAM), 78–99 (WLIRNIHANGASLFFICVYLHI), 114–134 (WNIGVILLFLLMATAFVGYVL), and 179–199 (FFAFHFLLPFLIVGLTLIHLL). The heme b site is built by histidine 84 and histidine 98. Residues histidine 183 and histidine 197 each contribute to the heme b site. Histidine 202 is a binding site for a ubiquinone. 4 consecutive transmembrane segments (helical) span residues 227-247 (YKDLLGFFLMIILLALLALFL), 289-309 (LGGVLALLFSIFILMLIPMLH), 321-341 (MTQFLFWTLVANAIILTWIGG), and 348-368 (FILVGQIASVTYFSLFLIIIP).

It belongs to the cytochrome b family. The cytochrome bc1 complex contains 3 respiratory subunits (MT-CYB, CYC1 and UQCRFS1), 2 core proteins (UQCRC1 and UQCRC2) and probably 6 low-molecular weight proteins. Heme b serves as cofactor.

It is found in the mitochondrion inner membrane. Component of the ubiquinol-cytochrome c reductase complex (complex III or cytochrome b-c1 complex) that is part of the mitochondrial respiratory chain. The b-c1 complex mediates electron transfer from ubiquinol to cytochrome c. Contributes to the generation of a proton gradient across the mitochondrial membrane that is then used for ATP synthesis. The chain is Cytochrome b (mt-cyb) from Squalus acanthias (Spiny dogfish).